Consider the following 382-residue polypeptide: D-alanine--D-alanine ligase (382 aa).

One can recognise an ATP-grasp domain in the interval Lys-139–Ala-348. Residue Glu-168–Ile-223 coordinates ATP. The Mg(2+) site is built by Asp-300, Glu-315, and Asn-317.

This sequence belongs to the D-alanine--D-alanine ligase family. Requires Mg(2+) as cofactor. Mn(2+) is required as a cofactor.

The protein localises to the cytoplasm. The catalysed reaction is 2 D-alanine + ATP = D-alanyl-D-alanine + ADP + phosphate + H(+). The protein operates within cell wall biogenesis; peptidoglycan biosynthesis. Functionally, cell wall formation. The protein is D-alanine--D-alanine ligase of Methylobacterium sp. (strain 4-46).